The chain runs to 147 residues: Protein-export protein SecB (147 aa).

The protein belongs to the SecB family. Homotetramer, a dimer of dimers. One homotetramer interacts with 1 SecA dimer.

The protein resides in the cytoplasm. Its function is as follows. One of the proteins required for the normal export of preproteins out of the cell cytoplasm. It is a molecular chaperone that binds to a subset of precursor proteins, maintaining them in a translocation-competent state. It also specifically binds to its receptor SecA. The protein is Protein-export protein SecB of Neisseria meningitidis serogroup A / serotype 4A (strain DSM 15465 / Z2491).